A 234-amino-acid chain; its full sequence is Chromatin remodeling protein EBS (234 aa).

In terms of domain architecture, BAH spans 29 to 144; that stretch reads KVVRAGDCVL…AATGAFTPDR (116 aa). A PHD-type zinc finger spans residues 146–197; sequence AVYCKCEMPYNPDDLMVQCEGCKDWYHPACVGMTIEEAKKLDHFVCAECSSD.

This sequence belongs to the SHL1/EBS protein family. As to quaternary structure, recognizes di- and trimethylated histone H3 at lysine 4 (H3K4me2 and H3K4me3). Interacts with HDA6. As to expression, expressed ubiquitously, with higher levels in floral buds.

The protein resides in the nucleus. Its function is as follows. Chromatin remodeling factor that binds to methylated histone (e.g. H3K4me2/3) to prevent their acetylation (e.g. H3K9K14Ac), likely by recruiting histone deacetylase (HDAC) complexes, and thus regulating the transcription of target genes. Negative regulator in developmental processes in a gibberellic acid- (GA-) dependent manner, such as germination, flowering induction, and flower organ specification, probably by modulating developmental gene expression. Involved in the chromatin-mediated repression of floral initiation and controls genes regulating flowering. Negatively regulates the expression of the floral integrator FT epigenetically, by preventing high levels of H3 acetylation, thus maintaining an inactive chromatin conformation at FT locus. The chain is Chromatin remodeling protein EBS from Arabidopsis thaliana (Mouse-ear cress).